Reading from the N-terminus, the 262-residue chain is Acyl-[acyl-carrier-protein]--UDP-N-acetylglucosamine O-acyltransferase (262 aa).

It belongs to the transferase hexapeptide repeat family. LpxA subfamily. As to quaternary structure, homotrimer.

It is found in the cytoplasm. The catalysed reaction is a (3R)-hydroxyacyl-[ACP] + UDP-N-acetyl-alpha-D-glucosamine = a UDP-3-O-[(3R)-3-hydroxyacyl]-N-acetyl-alpha-D-glucosamine + holo-[ACP]. It participates in glycolipid biosynthesis; lipid IV(A) biosynthesis; lipid IV(A) from (3R)-3-hydroxytetradecanoyl-[acyl-carrier-protein] and UDP-N-acetyl-alpha-D-glucosamine: step 1/6. Involved in the biosynthesis of lipid A, a phosphorylated glycolipid that anchors the lipopolysaccharide to the outer membrane of the cell. The sequence is that of Acyl-[acyl-carrier-protein]--UDP-N-acetylglucosamine O-acyltransferase from Pectobacterium carotovorum subsp. carotovorum (strain PC1).